The primary structure comprises 70 residues: MRAIISLFLISAMVFSMIQAVPEEEGLQLSEDERGGCLPHNRFCNALSGPRCCSGLKCKELSIWDSRCLG.

The N-terminal stretch at 1–20 is a signal peptide; it reads MRAIISLFLISAMVFSMIQA. Positions 21–34 are excised as a propeptide; that stretch reads VPEEEGLQLSEDER. 3 disulfides stabilise this stretch: C37–C53, C44–C58, and C52–C68. Residue L69 is modified to Leucine amide.

The protein belongs to the neurotoxin 01 (U2-agtx) family. Expressed by the venom gland.

The protein localises to the secreted. Its function is as follows. Insect active toxin causing rapid but reversible paralysis in crickets. No activity shown in mammals. Suppresses the excitatory postsynaptic potentials evoked in lobster neuromuscular synaptic preparations, possibly by blocking the presynaptic calcium channel. Induces instantaneous reversible paralysis when injected into crickets. Does not show effect on mammalian Cav2.1/CACNA1A, Cav2.2/CACNA1B and Cav2.3/CACNA1E. The polypeptide is U2-agatoxin-Ao1a (Agelena orientalis (Funnel-web spider)).